The following is a 677-amino-acid chain: UvrABC system protein B (677 aa).

The 389-residue stretch at 24–412 (EGVLQGVPAQ…EGIVVEQVIR (389 aa)) folds into the Helicase ATP-binding domain. 37–44 (GVTGSGKT) lines the ATP pocket. A Beta-hairpin motif is present at residues 90–113 (YYDYYQPEAYLPNSDTYIEKDLAI). The region spanning 429-591 (QIDDLMEEIQ…ITPQQIKKAR (163 aa)) is the Helicase C-terminal domain. One can recognise a UVR domain in the interval 636–671 (EKSIERTRKLMQEAAKKLEFIEAAQYRNELLKLEDL).

This sequence belongs to the UvrB family. Forms a heterotetramer with UvrA during the search for lesions. Interacts with UvrC in an incision complex.

Its subcellular location is the cytoplasm. The UvrABC repair system catalyzes the recognition and processing of DNA lesions. A damage recognition complex composed of 2 UvrA and 2 UvrB subunits scans DNA for abnormalities. Upon binding of the UvrA(2)B(2) complex to a putative damaged site, the DNA wraps around one UvrB monomer. DNA wrap is dependent on ATP binding by UvrB and probably causes local melting of the DNA helix, facilitating insertion of UvrB beta-hairpin between the DNA strands. Then UvrB probes one DNA strand for the presence of a lesion. If a lesion is found the UvrA subunits dissociate and the UvrB-DNA preincision complex is formed. This complex is subsequently bound by UvrC and the second UvrB is released. If no lesion is found, the DNA wraps around the other UvrB subunit that will check the other stand for damage. This Bacteroides thetaiotaomicron (strain ATCC 29148 / DSM 2079 / JCM 5827 / CCUG 10774 / NCTC 10582 / VPI-5482 / E50) protein is UvrABC system protein B.